The following is a 164-amino-acid chain: Phosphopantetheine adenylyltransferase (164 aa).

Serine 9 serves as a coordination point for substrate. ATP-binding positions include 9–10 (SF) and histidine 17. The substrate site is built by lysine 41, valine 78, and arginine 92. Residues 93-95 (GLR), glutamate 103, and 128-134 (VRTITAT) contribute to the ATP site.

This sequence belongs to the bacterial CoaD family. As to quaternary structure, homohexamer. Requires Mg(2+) as cofactor.

It localises to the cytoplasm. The catalysed reaction is (R)-4'-phosphopantetheine + ATP + H(+) = 3'-dephospho-CoA + diphosphate. It functions in the pathway cofactor biosynthesis; coenzyme A biosynthesis; CoA from (R)-pantothenate: step 4/5. Reversibly transfers an adenylyl group from ATP to 4'-phosphopantetheine, yielding dephospho-CoA (dPCoA) and pyrophosphate. In Brucella anthropi (strain ATCC 49188 / DSM 6882 / CCUG 24695 / JCM 21032 / LMG 3331 / NBRC 15819 / NCTC 12168 / Alc 37) (Ochrobactrum anthropi), this protein is Phosphopantetheine adenylyltransferase.